The following is a 318-amino-acid chain: UDP-N-acetylenolpyruvoylglucosamine reductase (318 aa).

Residues 38-204 (IGGICPVVVE…LGIEILLKEG (167 aa)) form the FAD-binding PCMH-type domain. The active site involves Arg182. The interval 212-232 (SLKDKRDRRNSSQPENKKSAG) is disordered. The segment covering 213–229 (LKDKRDRRNSSQPENKK) has biased composition (basic and acidic residues). Ser233 (proton donor) is an active-site residue. Glu310 is a catalytic residue.

Belongs to the MurB family. FAD is required as a cofactor.

It is found in the cytoplasm. It carries out the reaction UDP-N-acetyl-alpha-D-muramate + NADP(+) = UDP-N-acetyl-3-O-(1-carboxyvinyl)-alpha-D-glucosamine + NADPH + H(+). It functions in the pathway cell wall biogenesis; peptidoglycan biosynthesis. Its function is as follows. Cell wall formation. The sequence is that of UDP-N-acetylenolpyruvoylglucosamine reductase from Leptospira borgpetersenii serovar Hardjo-bovis (strain JB197).